Here is a 408-residue protein sequence, read N- to C-terminus: Biphenyl dioxygenase system ferredoxin--NAD(+) reductase component (408 aa).

4–35 (TIAIIGAGLAGSTAARALRAQGYEGRIHLLGD) provides a ligand contact to FAD. 145-173 (SLVIVGGGLIGCEVATTARKLSVHVTILE) provides a ligand contact to NAD(+).

It belongs to the bacterial ring-hydroxylating dioxygenase ferredoxin reductase family. As to quaternary structure, this dioxygenase system consists of four proteins: the two subunits of the hydroxylase component (BphA and BphE), a ferredoxin (BphF) and a ferredoxin reductase (BphG). FAD is required as a cofactor.

The catalysed reaction is 2 reduced [2Fe-2S]-[ferredoxin] + NAD(+) + H(+) = 2 oxidized [2Fe-2S]-[ferredoxin] + NADH. Its pathway is xenobiotic degradation; biphenyl degradation. Its function is as follows. Part of the electron transfer component of biphenyl dioxygenase, transfers electrons from ferredoxin (BphF) to NADH. The chain is Biphenyl dioxygenase system ferredoxin--NAD(+) reductase component (bphG) from Paraburkholderia xenovorans (strain LB400).